The sequence spans 147 residues: Protein LOL4 (147 aa).

3 putative zinc finger regions span residues 4-34, 44-74, and 82-112; these read QLICSGCRRVVQYRRGVAGVCCPGCNTLTAV, ELICSGCPTLLFYNRGASNIRCPSCNRLNST, and HLTCGQCRTTLMHPPGASTVQCATCRYVNHV.

The protein resides in the nucleus. Its function is as follows. Putative zinc finger that may be involved in programmed cell death and defense response. The polypeptide is Protein LOL4 (LOL4) (Oryza sativa subsp. japonica (Rice)).